The chain runs to 361 residues: Peptide chain release factor 1 (361 aa).

Glutamine 236 carries the post-translational modification N5-methylglutamine. Residues 285–309 show a composition bias toward basic and acidic residues; the sequence is NAKDSARAADRKAQVGSGDRSERIR. Residues 285 to 312 form a disordered region; sequence NAKDSARAADRKAQVGSGDRSERIRTYN.

It belongs to the prokaryotic/mitochondrial release factor family. Post-translationally, methylated by PrmC. Methylation increases the termination efficiency of RF1.

It is found in the cytoplasm. Its function is as follows. Peptide chain release factor 1 directs the termination of translation in response to the peptide chain termination codons UAG and UAA. In Methylobacterium radiotolerans (strain ATCC 27329 / DSM 1819 / JCM 2831 / NBRC 15690 / NCIMB 10815 / 0-1), this protein is Peptide chain release factor 1.